A 363-amino-acid polypeptide reads, in one-letter code: Chorismate synthase (363 aa).

The tract at residues 36-58 (SESDIQGDLDRRRPGQSKITTPR) is disordered. R47 is an NADP(+) binding site. Residues 124-126 (RSS), G286, 301-305 (KPTAT), and R327 contribute to the FMN site.

It belongs to the chorismate synthase family. In terms of assembly, homotetramer. The cofactor is FMNH2.

It carries out the reaction 5-O-(1-carboxyvinyl)-3-phosphoshikimate = chorismate + phosphate. Its pathway is metabolic intermediate biosynthesis; chorismate biosynthesis; chorismate from D-erythrose 4-phosphate and phosphoenolpyruvate: step 7/7. In terms of biological role, catalyzes the anti-1,4-elimination of the C-3 phosphate and the C-6 proR hydrogen from 5-enolpyruvylshikimate-3-phosphate (EPSP) to yield chorismate, which is the branch point compound that serves as the starting substrate for the three terminal pathways of aromatic amino acid biosynthesis. This reaction introduces a second double bond into the aromatic ring system. This chain is Chorismate synthase, found in Crocosphaera subtropica (strain ATCC 51142 / BH68) (Cyanothece sp. (strain ATCC 51142)).